A 453-amino-acid polypeptide reads, in one-letter code: Serine/threonine-protein phosphatase 2A regulatory subunit B'' subunit gamma (453 aa).

The tract at residues 1–27 (MDWKDVLRRRLASPNSDPKRKKSEQEL) is disordered. EF-hand domains follow at residues 273–308 (PSAL…TMTN) and 341–376 (KEPA…IQEL). Ca(2+) contacts are provided by Asp-286, Asp-288, Asn-290, Met-292, and Glu-297.

Interacts with MCM3AP/GANP, PPP5C, and the phosphatase 2A core enzyme composed of the PPP2CA catalytic subunit and the constant regulatory subunit PPP2R1A. Finds in a complex with ABCB1, TFPI2 and PPP2R3C; leading to the dephosphorylation of ABCB1.

The protein resides in the nucleus. The protein localises to the cytoplasm. Its function is as follows. May regulate MCM3AP phosphorylation through phosphatase recruitment. May act as a negative regulator of ABCB1 expression and function through the dephosphorylation of ABCB1 by TFPI2/PPP2R3C complex. May play a role in the activation-induced cell death of B-cells. This Rattus norvegicus (Rat) protein is Serine/threonine-protein phosphatase 2A regulatory subunit B'' subunit gamma (Ppp2r3c).